The primary structure comprises 222 residues: Millepora cytotoxin-1 (222 aa).

Positions 1–20 (MVTLYLHVPILLLVVITARA) are cleaved as a signal peptide. The propeptide occupies 21-75 (APKPDTHNPFDELSSVAEKQDLHYGDRSRKDPFIAQNDVGNNFRDGTQENLTKVR). 3 cysteine pairs are disulfide-bonded: C89–C115, C142–C168, and C179–C222. Repeats lie at residues 100 to 109 (SIHDNHYEDR), 153 to 162 (SIHDNYYEDR), and 206 to 215 (SQHNNYYEDR).

This sequence belongs to the dermatopontin family. Is not glycosylated.

Its subcellular location is the secreted. The protein resides in the nematocyst. In terms of biological role, is potently cytotoxic (EC(50) value 79 ng/mL) towards L1210 mouse leukemia cells, has hemagglutination activity on sheep erythrocytes, and is lethal in crayfish. Has no phospholipase A2 activity. In Millepora dichotoma (Net fire coral), this protein is Millepora cytotoxin-1.